The sequence spans 554 residues: (S)-1-hydroxy-N-methylcanadine 13-hydroxylase CYP82X2 (554 aa).

Residues 23-43 (IISTFIVTIISIVFLYTVLLI) traverse the membrane as a helical segment. Cysteine 494 contributes to the heme binding site.

Belongs to the cytochrome P450 family. Heme is required as a cofactor. As to expression, highly expressed in capsules. Expressed is stems.

The protein localises to the membrane. The enzyme catalyses (S)-1-hydroxy-N-methylcanadine + reduced [NADPH--hemoprotein reductase] + O2 = (13S,14R)-1,13-dihydroxy-N-methylcanadine + oxidized [NADPH--hemoprotein reductase] + H2O + H(+). It functions in the pathway alkaloid biosynthesis. In terms of biological role, cytochrome P450 involved in the biosynthesis of the benzylisoquinoline alkaloid noscapine. Converts (S)-1-hydroxy-N-methylcanadine to (13S,14R)-1,13-dihydroxy-N-methylcanadine. The protein is (S)-1-hydroxy-N-methylcanadine 13-hydroxylase CYP82X2 of Papaver somniferum (Opium poppy).